Reading from the N-terminus, the 113-residue chain is Histidine triad nucleotide-binding protein (113 aa).

2 residues coordinate Zn(2+): C5 and C8. The region spanning 6–113 is the HIT domain; the sequence is IFCKIAQKQI…GGKKLAWDKL (108 aa). AMP is bound at residue D31. Position 47 (H47) interacts with Zn(2+). The AMP site is built by N86, G92, and T94. H97 provides a ligand contact to Zn(2+). The Histidine triad motif motif lies at 97-101; the sequence is HIHFH. Positions 99 and 101 each coordinate AMP. Catalysis depends on H99, which acts as the Tele-AMP-histidine intermediate.

Belongs to the HINT family.

The protein resides in the nucleus. The protein localises to the cytoplasm. The enzyme catalyses adenosine 5'-phosphoramidate + H2O = AMP + NH4(+). Functionally, hydrolyzes purine nucleotide phosphoramidates with a single phosphate group, including adenosine 5'monophosphoramidate (AMP-NH2), adenosine 5'monophosphomorpholidate (AMP-morpholidate) and guanosine 5'monophosphomorpholidate (GMP-morpholidate). Hydrolyzes lysyl-AMP (AMP-N-epsilon-(N-alpha-acetyl lysine methyl ester)) generated by lysine tRNA ligase, as well as Met-AMP, His-AMP and Asp-AMP, lysyl-GMP (GMP-N-epsilon-(N-alpha-acetyl lysine methyl ester)) and AMP-N-alanine methyl ester. May also function as scaffolding protein that mediates protein-protein interactions. This chain is Histidine triad nucleotide-binding protein, found in Entamoeba histolytica (strain ATCC 30459 / HM-1:IMSS / ABRM).